A 741-amino-acid polypeptide reads, in one-letter code: Oosporein cluster regulator OpS3 (741 aa).

The disordered stretch occupies residues 16–39 (GRPARGQSTTTRSRNTQQSAPTSQ). Positions 20 to 34 (RGQSTTTRSRNTQQS) are enriched in low complexity. The segment at residues 44–69 (CRRCRQHRIKCSEKPCEPCRANNSKC) is a DNA-binding region (zn(2)-C6 fungal-type). Residues 139–167 (HPNTPNSCPSQSGDIRQQQIPCSQHASPA) form a disordered region. Positions 473-500 (TAGQSMARLSETIRQLETALDELPEQLL) form a coiled coil. Residues 501-528 (TRHGSRTPTNNGQTHRSRPTCSTMPHTN) form a disordered region. Residues 506 to 528 (RTPTNNGQTHRSRPTCSTMPHTN) show a composition bias toward polar residues.

It localises to the nucleus. Functionally, transcription factor involved in regulation of gene cluster that mediates the biosynthesis of oosporein, a metabolite required for fungal virulence that acts by evading host immunity to facilitate fungal multiplication in insects. Binds oosporein cluster genes at a conserved 5'-CGGA-3' motif with the exception of OpS5. The presence of this motif in the OpS3 promoter would suggest the formation of a positive feedback loop for self-activation. This is Oosporein cluster regulator OpS3 from Beauveria bassiana (strain ARSEF 2860) (White muscardine disease fungus).